The chain runs to 1446 residues: Toll-like receptor 7 (1446 aa).

A signal peptide spans 1–16 (MAAILLLLLGFSWSLA). Residues 17–1049 (VESALAPKES…QHGIPESYIP (1033 aa)) lie on the Extracellular side of the membrane. LRR repeat units lie at residues 133-156 (LQTLEALRLDSCKLLQLPNNAFEG), 158-180 (ATLKSLRLSTHNSEWGPTRTLEL), 188-211 (LKQLTDLDLGDNNLRQLPSGFLCP), 213-235 (GNLQVLNLTRNRIRTAEQMGFAD), 246-270 (GSELQVLDASHNELRSISESWGISR), 271-294 (LRRLQHLNLAYNNLSELSGEALAG), 295-318 (LASLRIVNLSNNHLETLPEGLFAG), 320-342 (KELREIHLQQNELYELPKGLFHR), 344-368 (EQLLVVDLSGNQLTSNHVDNTTFAG), 369-392 (LIRLIVLNLAHNALTRIDYRTFKE), 393-416 (LYFLQILNLRNNSIGHIEDNAFLP), 417-440 (LYNLHTLNLAENRLHTLDDKLFNG), 442-464 (YVLSKLTLNNNLISVVEPAVFKN), 465-488 (CSDLKELDLSSNQLNEVPRALQDL), 489-511 (AMLRTLDLGENQIRTFDNQSFKN), 513-535 (HQLTGLRLIDNQIGNITVGMFQD), 536-559 (LPRLSVLNLAKNRIQSIERGSFDK), 561-582 (FELEAIRLDRNFLADINGVFAT), 584-605 (VSLLWLNLSENHLVWFDYAFIP), 606-629 (SNLKWLDIHGNYIEALGNYYKLQE), 631-652 (IRVKTLDASHNRITEIGPMSIP), 653-675 (NTIELLFINNNLIGNVQPNAFVD), and 677-699 (ANLARVDLYANQLSKLQLQQLRV). The LRRCT domain maps to 716-773 (NPFECDCTMDWLQRINNLTTRQHPRVMDMANIECVMPHARGAAVRPLSGLRPQDFLCR). 3 disulfide bridges follow: cysteine 722–cysteine 772, cysteine 796–cysteine 802, and cysteine 800–cysteine 815. 6 LRR repeats span residues 828–851 (PMDSSVVYLDGNNFPVLKNHAFIG), 852–875 (RKNLRALYVNGSQVAAIQNRTFAS), 876–899 (LASLQLLHLADNKLRTLHGYEFEQ), 900–923 (LSALRELYLQNNQLTTIENATLAP), 925–947 (AALELIRIDGNRLVTLPIWQMHA), and 951–979 (GTRLKSISLGRNQWSCRCQFLQALTSYVA). The cysteines at positions 966 and 993 are disulfide-linked. Residues 1050-1070 (LLAAALALLFLLVVIAMVFAF) form a helical membrane-spanning segment. The Cytoplasmic segment spans residues 1071 to 1446 (RESLRIWLFA…QGPHVQAYLV (376 aa)). The TIR domain occupies 1096 to 1233 (KLYDAVLLHS…HFWEKLRYAL (138 aa)). Disordered regions lie at residues 1301-1332 (QNYSTATTATPSPRPQRRGEQPGSGSGGNHHL) and 1388-1446 (RPKR…AYLV). Residues 1395–1413 (HLQQAQAGTLGSKASQAAH) are compositionally biased toward polar residues. The span at 1414–1426 (QQQQQQQQQQQQQ) shows a compositional bias: low complexity. Polar residues predominate over residues 1427–1439 (PNPTAVSGQQQGP).

This sequence belongs to the Toll-like receptor family. Expressed in the fan-shaped body and the ellipsoid body, which are components of the locomotion center in the CNS (at protein level).

The protein resides in the cell membrane. Toll-related receptor which binds to the neurotrophins NT1 and spz5. Essential for antiviral autophagy, it detects and binds to the vesicular stomatitis virus (vsv) following infection. This role is likely to be independent of the canonical Toll, immune deficiency, and JAK-STAT signaling pathways. Functions in olfactory circuit assembly by promoting synaptic partner matching between olfactory receptor neurons (ORN) axons and projection neurons (PN) dendrites partners in the antennal lobe. Function in the Va1d ORNs is necessary and sufficient for correct targeting to their partner PN dendrites. Also involved in the targeting of other classes of ORN axons. Functions with Toll-6 to regulate motor axon targeting and neuronal survival in the central nervous system (CNS). May be an upstream component of the NF-kappa-B (rel) regulatory cascade. The protein is Toll-like receptor 7 of Drosophila melanogaster (Fruit fly).